The chain runs to 384 residues: 23S rRNA (uracil(747)-C(5))-methyltransferase RlmC (384 aa).

4 residues coordinate [4Fe-4S] cluster: C7, C15, C18, and C94. Q219, F248, E269, and N316 together coordinate S-adenosyl-L-methionine. C343 functions as the Nucleophile in the catalytic mechanism.

It belongs to the class I-like SAM-binding methyltransferase superfamily. RNA M5U methyltransferase family. RlmC subfamily.

It carries out the reaction uridine(747) in 23S rRNA + S-adenosyl-L-methionine = 5-methyluridine(747) in 23S rRNA + S-adenosyl-L-homocysteine + H(+). In terms of biological role, catalyzes the formation of 5-methyl-uridine at position 747 (m5U747) in 23S rRNA. This Shewanella sp. (strain MR-4) protein is 23S rRNA (uracil(747)-C(5))-methyltransferase RlmC.